The chain runs to 352 residues: Biotin synthase (352 aa).

The Radical SAM core domain maps to 44–262 (NRVQVSTLLS…LAVARILMPK (219 aa)). [4Fe-4S] cluster is bound by residues Cys-59, Cys-63, and Cys-66. Residues Cys-103, Cys-134, Cys-194, and Arg-266 each coordinate [2Fe-2S] cluster.

It belongs to the radical SAM superfamily. Biotin synthase family. Homodimer. It depends on [4Fe-4S] cluster as a cofactor. [2Fe-2S] cluster is required as a cofactor.

The enzyme catalyses (4R,5S)-dethiobiotin + (sulfur carrier)-SH + 2 reduced [2Fe-2S]-[ferredoxin] + 2 S-adenosyl-L-methionine = (sulfur carrier)-H + biotin + 2 5'-deoxyadenosine + 2 L-methionine + 2 oxidized [2Fe-2S]-[ferredoxin]. It participates in cofactor biosynthesis; biotin biosynthesis; biotin from 7,8-diaminononanoate: step 2/2. Its function is as follows. Catalyzes the conversion of dethiobiotin (DTB) to biotin by the insertion of a sulfur atom into dethiobiotin via a radical-based mechanism. This is Biotin synthase from Pseudomonas entomophila (strain L48).